The sequence spans 81 residues: U-poneritoxin(01)-Om6a (81 aa).

The first 21 residues, 1-21 (MRRSYVLLAFAIVLIISIISA), serve as a signal peptide directing secretion. A propeptide spanning residues 22-43 (QVEADASSDAFADAVADAVADP) is cleaved from the precursor. Ala-79 carries the alanine amide modification.

This sequence belongs to the formicidae venom precursor-01 superfamily. In terms of processing, truncated sequences of this peptide have also been found in the venom. It is possible they have been cleaved in the venom. Expressed by the venom gland.

The protein resides in the secreted. Functionally, cationic amphipathic alpha-helical peptide with antimicrobial activities against E.coli (MIC=3.1), and S.aureus (MIC=3.1 uM). Also shows histamine-releasing activity (33.6% at 10 uM). Does not have activity against S.cerevisiae. Does not show hemolytic activity, even at 50 uM. The sequence is that of U-poneritoxin(01)-Om6a from Odontomachus monticola (Trap-jaw ant).